Here is a 229-residue protein sequence, read N- to C-terminus: Germin-like protein 12-2 (229 aa).

An N-terminal signal peptide occupies residues 1–22; it reads MASSNFFLLTALIALVATQAMA. A disulfide bond links Cys32 and Cys47. Residues 62 to 217 form the Cupin type-1 domain; sequence ANLDKPMDTT…AFQVDKKAVD (156 aa). An N-linked (GlcNAc...) asparagine glycan is attached at Asn78. Mn(2+) contacts are provided by His111, His113, Glu118, and His162.

Belongs to the germin family. As to quaternary structure, oligomer (believed to be a pentamer but probably hexamer).

The protein localises to the secreted. It localises to the extracellular space. It is found in the apoplast. May play a role in plant defense. Probably has no oxalate oxidase activity even if the active site is conserved. The chain is Germin-like protein 12-2 from Oryza sativa subsp. japonica (Rice).